The primary structure comprises 473 residues: MTFPMWFAVPPEVPSAWLSTGMGPGPLLAAARAWHALAAQYTEIATELASVLAAVQASSWQGPSADRFVVAHQPFRYWLTHAATVATAAAAAHETAAAGYTSALGGMPTLAELAANHAMHGALVTTNFFGVNTIPIALNEADYLRMWIQAATVMSHYQAVAHESVAATPSTPPAPQIVTSAASSAASSSFPDPTKLILQLLKDFLELLRYLAVELLPGPLGDLIAQVLDWFISFVSGPVFTFLAYLVLDPLIYFGPFAPLTSPVLLPAGLTGLAGLGAVSGPAGPMVERVHSDGPSRQSWPAATGVTLVGTNPAALVTTPAPAPTTSAAPTAPSTPGSSAAQGLYAVGGPDGEGFNPIAKTTALAGVTTDAAAPAAKLPGDQAQSSASKATRLRRRLRQHRFEFLADDGRLTMPNTPEMADVAAGNRGLDALGFAGTIPKSAPGSATGLTHLGGGFADVLSQPMLPHTWDGSD.

The Iron-binding motif motif lies at 203 to 206; it reads DFLE. The next 2 membrane-spanning stretches (helical) occupy residues 227–247 and 250–270; these read VLDW…AYLV and PLIY…PAGL.

Belongs to the mycobacterial PPE family.

It is found in the cell membrane. Its function is as follows. Essential for efficient heme-iron acquisition (HIA). Binds iron. Strains with a functional PPE37 can utilize low concentrations of hemin very efficiently in broth and on agar plates. During infection, might interfere with the pro-inflammatory cytokine response in infected macrophages. Functionally, in vitro, incubation of the protein in the presence of M.tuberculosis proteases leads to the cleavage of PPE37 into two segments, the N- and C-terminal segments. Transfection of human monocytic THP-1 cell lines with the N-terminal segment leads to the proliferation and differentiation of THP-1 cells into adherent stellate cells with dendritic cell-like morphology. Transfection of THP-1 cells with the C-terminal segment leads to the apoptosis of the cells. Recombinant protein antigens display strong B-cell response in tuberculosis patients and immunized mice. The protein is PPE family protein PPE37 of Mycobacterium tuberculosis (strain ATCC 25618 / H37Rv).